A 312-amino-acid polypeptide reads, in one-letter code: uncharacterized protein (312 aa).

Transmembrane regions (helical) follow at residues 11 to 31 (IAAI…KIAL), 46 to 66 (IAFA…SIRV), 72 to 92 (ILPL…FGLV), 98 to 118 (EAGI…AYVL), 128 to 148 (GFTV…GVDV), 155 to 171 (GSLL…MYNT), 183 to 203 (TELT…IALV), 221 to 241 (PGFV…TSFL), 254 to 274 (MSAF…VILN), and 277 to 297 (LAWY…GSNI). EamA domains lie at 18–142 (FIIG…FIFV) and 164–297 (LSSA…GSNI).

Belongs to the EamA transporter family.

The protein resides in the cell membrane. This is an uncharacterized protein from Bacillus subtilis (strain 168).